We begin with the raw amino-acid sequence, 311 residues long: Methionyl-tRNA formyltransferase (311 aa).

109–112 contacts (6S)-5,6,7,8-tetrahydrofolate; the sequence is SLLP.

It belongs to the Fmt family.

It carries out the reaction L-methionyl-tRNA(fMet) + (6R)-10-formyltetrahydrofolate = N-formyl-L-methionyl-tRNA(fMet) + (6S)-5,6,7,8-tetrahydrofolate + H(+). In terms of biological role, attaches a formyl group to the free amino group of methionyl-tRNA(fMet). The formyl group appears to play a dual role in the initiator identity of N-formylmethionyl-tRNA by promoting its recognition by IF2 and preventing the misappropriation of this tRNA by the elongation apparatus. The polypeptide is Methionyl-tRNA formyltransferase (Solibacter usitatus (strain Ellin6076)).